The primary structure comprises 257 residues: Photosystem I chlorophyll a/b-binding protein 2, chloroplastic (257 aa).

A chloroplast-targeting transit peptide spans 1–43; the sequence is MASSLCASSAIAAISSPSFLGGKKLRLKKKLTVPAVSRPDASV. Position 55 (tryptophan 55) interacts with chlorophyll b. Residues phenylalanine 75, serine 81, and glutamate 94 each contribute to the chlorophyll a site. Chlorophyll b is bound at residue arginine 99. 2 consecutive transmembrane segments (helical) span residues 100–120 and 133–153; these read WAML…IGIL and YFTD…WAEG. Glutamate 152 and arginine 155 together coordinate chlorophyll b. Chlorophyll a-binding residues include lysine 208, glutamate 209, asparagine 212, arginine 214, glutamine 226, and histidine 241. A helical membrane pass occupies residues 215-235; the sequence is LAMLAVMGAWFQHIYTGTGPI.

The protein belongs to the light-harvesting chlorophyll a/b-binding (LHC) protein family. As to quaternary structure, the LHC complex consists of chlorophyll a-b binding proteins. Red-emitting heterodimers with LHCA3 and LHCA5. Binds to carotenoids. Binds at least 14 chlorophylls (8 Chl-a and 6 Chl-b) and carotenoids such as lutein and neoxanthin. is required as a cofactor. Photoregulated by reversible phosphorylation of its threonine residues.

The protein resides in the plastid. It is found in the chloroplast thylakoid membrane. In terms of biological role, the light-harvesting complex (LHC) functions as a light receptor, it captures and delivers excitation energy to photosystems with which it is closely associated, here photosystem I. The sequence is that of Photosystem I chlorophyll a/b-binding protein 2, chloroplastic from Arabidopsis thaliana (Mouse-ear cress).